The following is a 1555-amino-acid chain: Glycogen debranching enzyme (1555 aa).

At Ser87 the chain carries Phosphoserine. Catalysis depends on residues Asp549, His552, and Asp650.

It belongs to the glycogen debranching enzyme family. Monomer. Interacts with NHLRC1/malin. In terms of processing, the N-terminus is blocked. Ubiquitinated.

It localises to the cytoplasm. The catalysed reaction is Transfers a segment of a (1-&gt;4)-alpha-D-glucan to a new position in an acceptor, which may be glucose or a (1-&gt;4)-alpha-D-glucan.. It catalyses the reaction Hydrolysis of (1-&gt;6)-alpha-D-glucosidic branch linkages in glycogen phosphorylase limit dextrin.. Multifunctional enzyme acting as 1,4-alpha-D-glucan:1,4-alpha-D-glucan 4-alpha-D-glycosyltransferase and amylo-1,6-glucosidase in glycogen degradation. The chain is Glycogen debranching enzyme (AGL) from Oryctolagus cuniculus (Rabbit).